The primary structure comprises 143 residues: Hemoglobin subunit alpha (143 aa).

Positions 2–143 (SLTARDKSVV…LSAALADKYR (142 aa)) constitute a Globin domain. An O2-binding site is contributed by H60. H89 is a heme b binding site.

It belongs to the globin family. Heterotetramer of two alpha chains and two beta chains. Red blood cells.

Involved in oxygen transport from gills to the various peripheral tissues. This is Hemoglobin subunit alpha (hba) from Salmo salar (Atlantic salmon).